A 137-amino-acid chain; its full sequence is Phosphoribosyl-ATP pyrophosphatase (137 aa).

Positions 114–124 (EGTSGIEEKAL) are enriched in basic and acidic residues. A disordered region spans residues 114-137 (EGTSGIEEKALRKSLQRAAEEAQP).

It belongs to the PRA-PH family.

It is found in the cytoplasm. The enzyme catalyses 1-(5-phospho-beta-D-ribosyl)-ATP + H2O = 1-(5-phospho-beta-D-ribosyl)-5'-AMP + diphosphate + H(+). It participates in amino-acid biosynthesis; L-histidine biosynthesis; L-histidine from 5-phospho-alpha-D-ribose 1-diphosphate: step 2/9. The sequence is that of Phosphoribosyl-ATP pyrophosphatase from Paracidovorax citrulli (strain AAC00-1) (Acidovorax citrulli).